The primary structure comprises 228 residues: Cytochrome c oxidase subunit 2 (228 aa).

The Mitochondrial intermembrane portion of the chain corresponds to 1 to 14 (MANHSQLGFQDASS). A helical membrane pass occupies residues 15–45 (PIMEELVEFHDHALIVALAICSLVLYLLAHM). The Mitochondrial matrix segment spans residues 46 to 58 (LMEKLSSNAVDAQ). The chain crosses the membrane as a helical span at residues 59-86 (EVELIWTILPAIVLVLLALPSLQILYMM). The Mitochondrial intermembrane portion of the chain corresponds to 87-228 (DEIDEPDLTL…ETWSSLLSAS (142 aa)). Cu cation-binding residues include H160, C195, E197, C199, H203, and M206. E197 is a Mg(2+) binding site.

It belongs to the cytochrome c oxidase subunit 2 family. In terms of assembly, component of the cytochrome c oxidase (complex IV, CIV), a multisubunit enzyme composed of 14 subunits. The complex is composed of a catalytic core of 3 subunits MT-CO1, MT-CO2 and MT-CO3, encoded in the mitochondrial DNA, and 11 supernumerary subunits COX4I, COX5A, COX5B, COX6A, COX6B, COX6C, COX7A, COX7B, COX7C, COX8 and NDUFA4, which are encoded in the nuclear genome. The complex exists as a monomer or a dimer and forms supercomplexes (SCs) in the inner mitochondrial membrane with NADH-ubiquinone oxidoreductase (complex I, CI) and ubiquinol-cytochrome c oxidoreductase (cytochrome b-c1 complex, complex III, CIII), resulting in different assemblies (supercomplex SCI(1)III(2)IV(1) and megacomplex MCI(2)III(2)IV(2)). Found in a complex with TMEM177, COA6, COX18, COX20, SCO1 and SCO2. Interacts with TMEM177 in a COX20-dependent manner. Interacts with COX20. Interacts with COX16. Cu cation is required as a cofactor.

It is found in the mitochondrion inner membrane. It carries out the reaction 4 Fe(II)-[cytochrome c] + O2 + 8 H(+)(in) = 4 Fe(III)-[cytochrome c] + 2 H2O + 4 H(+)(out). Functionally, component of the cytochrome c oxidase, the last enzyme in the mitochondrial electron transport chain which drives oxidative phosphorylation. The respiratory chain contains 3 multisubunit complexes succinate dehydrogenase (complex II, CII), ubiquinol-cytochrome c oxidoreductase (cytochrome b-c1 complex, complex III, CIII) and cytochrome c oxidase (complex IV, CIV), that cooperate to transfer electrons derived from NADH and succinate to molecular oxygen, creating an electrochemical gradient over the inner membrane that drives transmembrane transport and the ATP synthase. Cytochrome c oxidase is the component of the respiratory chain that catalyzes the reduction of oxygen to water. Electrons originating from reduced cytochrome c in the intermembrane space (IMS) are transferred via the dinuclear copper A center (CU(A)) of subunit 2 and heme A of subunit 1 to the active site in subunit 1, a binuclear center (BNC) formed by heme A3 and copper B (CU(B)). The BNC reduces molecular oxygen to 2 water molecules using 4 electrons from cytochrome c in the IMS and 4 protons from the mitochondrial matrix. This chain is Cytochrome c oxidase subunit 2 (MT-CO2), found in Cairina moschata (Muscovy duck).